The chain runs to 102 residues: FMRFamide-like neuropeptides 9 (102 aa).

The N-terminal stretch at 1-19 is a signal peptide; sequence MNQFYALFLVACIAAMANA. The propeptide occupies 20 to 63; sequence YEEPDLDALAEFCGKESNRKYCDQIAQLATQHAIGINQEQVRME. F72 is modified (phenylalanine amide). Residues 75 to 90 constitute a propeptide that is removed on maturation; it reads RSGYPLVIDDEEMRMD. F99 carries the phenylalanine amide modification.

The protein belongs to the FARP (FMRFamide related peptide) family. Each flp gene is expressed in a distinct set of neurons.

Its subcellular location is the secreted. FMRFamides and FMRFamide-like peptides are neuropeptides. Its function is as follows. KPSFVRF-amide: Has no effect on somatic body wall muscle, inhibits contraction of vaginal vera muscle, and inhibits the activity of the dissected pharyngeal myogenic muscle system. Acts as a ligand for the npr-22 receptor in vitro. This is FMRFamide-like neuropeptides 9 from Caenorhabditis elegans.